The chain runs to 467 residues: Plasma alpha-L-fucosidase (467 aa).

A signal peptide spans 1 to 28 (MRPQELPRLAFPLLLLLLLLLPPPPCPA). N-linked (GlcNAc...) asparagine glycosylation is found at N171 and N239. S301 carries the phosphoserine; by FAM20C modification. N-linked (GlcNAc...) asparagine glycosylation occurs at N377.

It belongs to the glycosyl hydrolase 29 family. In terms of assembly, homotetramer.

The protein resides in the secreted. It catalyses the reaction an alpha-L-fucoside + H2O = L-fucose + an alcohol. Functionally, alpha-L-fucosidase is responsible for hydrolyzing the alpha-1,6-linked fucose joined to the reducing-end N-acetylglucosamine of the carbohydrate moieties of glycoproteins. This Homo sapiens (Human) protein is Plasma alpha-L-fucosidase (FUCA2).